The primary structure comprises 871 residues: Leucine--tRNA ligase (871 aa).

The 'HIGH' region motif lies at proline 42–histidine 52. A 'KMSKS' region motif is present at residues threonine 634–serine 638. Lysine 637 provides a ligand contact to ATP.

The protein belongs to the class-I aminoacyl-tRNA synthetase family.

It is found in the cytoplasm. It carries out the reaction tRNA(Leu) + L-leucine + ATP = L-leucyl-tRNA(Leu) + AMP + diphosphate. This Nostoc punctiforme (strain ATCC 29133 / PCC 73102) protein is Leucine--tRNA ligase.